Here is a 62-residue protein sequence, read N- to C-terminus: Translational regulator CsrA (62 aa).

This sequence belongs to the CsrA/RsmA family. As to quaternary structure, homodimer; the beta-strands of each monomer intercalate to form a hydrophobic core, while the alpha-helices form wings that extend away from the core.

The protein resides in the cytoplasm. A key translational regulator that binds mRNA to regulate translation initiation and/or mRNA stability. Mediates global changes in gene expression, shifting from rapid growth to stress survival by linking envelope stress, the stringent response and the catabolite repression systems. Usually binds in the 5'-UTR; binding at or near the Shine-Dalgarno sequence prevents ribosome-binding, repressing translation, binding elsewhere in the 5'-UTR can activate translation and/or stabilize the mRNA. Its function is antagonized by small RNA(s). The protein is Translational regulator CsrA of Haemophilus ducreyi (strain 35000HP / ATCC 700724).